The primary structure comprises 142 residues: Type II secretion system core protein G (142 aa).

A propeptide spans 1–8 (MRRQSQRG) (leader sequence). Residue F9 is modified to N-methylphenylalanine. A helical transmembrane segment spans residues 9-29 (FTLLEIMVVIVIMGILASLVV). The disordered stretch occupies residues 122–142 (SGQDGVPGTDDDIGNWTLSKK).

This sequence belongs to the GSP G family. Type II secretion system is composed of four main components: the outer membrane complex, the inner membrane complex, the cytoplasmic secretion ATPase and the periplasm-spanning pseudopilus. Forms homomultimers. Post-translationally, cleaved by the prepilin peptidase. In terms of processing, methylated by prepilin peptidase at the amino group of the N-terminal phenylalanine once the leader sequence is cleaved.

The protein resides in the cell inner membrane. Functionally, core component of the type II secretion system required for the energy-dependent secretion of extracellular factors such as proteases and toxins from the periplasm. Pseudopilin (pilin-like) protein that polymerizes to form the pseudopilus. Further polymerization triggers pseudopilus growth. The sequence is that of Type II secretion system core protein G from Klebsiella michiganensis (strain ATCC 8724 / DSM 4798 / JCM 20051 / NBRC 3318 / NRRL B-199 / KCTC 1686 / BUCSAV 143 / CCM 1901).